The primary structure comprises 251 residues: 2-C-methyl-D-erythritol 4-phosphate cytidylyltransferase (251 aa).

It belongs to the IspD/TarI cytidylyltransferase family. IspD subfamily.

It carries out the reaction 2-C-methyl-D-erythritol 4-phosphate + CTP + H(+) = 4-CDP-2-C-methyl-D-erythritol + diphosphate. It participates in isoprenoid biosynthesis; isopentenyl diphosphate biosynthesis via DXP pathway; isopentenyl diphosphate from 1-deoxy-D-xylulose 5-phosphate: step 2/6. Catalyzes the formation of 4-diphosphocytidyl-2-C-methyl-D-erythritol from CTP and 2-C-methyl-D-erythritol 4-phosphate (MEP). The protein is 2-C-methyl-D-erythritol 4-phosphate cytidylyltransferase of Cupriavidus pinatubonensis (strain JMP 134 / LMG 1197) (Cupriavidus necator (strain JMP 134)).